A 25-amino-acid chain; its full sequence is M-poneritoxin-Na1b (25 aa).

The protein belongs to the non-disulfide-bridged peptide (NDBP) superfamily. Medium-length antimicrobial peptide (group 3) family. Ponericin-W subfamily. Expressed by the venom gland.

Its subcellular location is the secreted. It is found in the target cell membrane. Functionally, membrane-perturbating peptide with multiple activities. It is insecticidal, since it induces reversible paralysis in insects (L.cuprina) after 1 hour, but fails to kill flies. It shows a relatively strong and broad-spectrum antibacterial activity against both Gram-positive and Gram-negative bacteria (MIC&lt;20 uM). It is also anthelmintic, since it potently inhibits the larval development of the major pathogenic nematode of ruminants (H.contortus, IC(50)=2.8 uM). Interestingly, only at 10 uM, it increases adult males motility of the other nematode B.malayi for 24 hours post-treatment, followed by a reduction in motility for the rest of the experiment. It shows cytotoxic activity against HEK293 cells (EC(50)=4-6 uM) and induces hemolysis in human erythrocytes (EC(50)=40-62 uM). In addition, it causes an important increase in intracellular calcium concentration on neuronal and epithelial cell lines, which supports a non-specific membrane perturbation mechanism of action. In vivo, it induces pain by intraplantar injection into mice, suggesting a defensive function against vertebrate predators. This chain is M-poneritoxin-Na1b, found in Neoponera apicalis (Ant).